A 317-amino-acid polypeptide reads, in one-letter code: Olfactory receptor 2F1 (317 aa).

The Extracellular portion of the chain corresponds to Met-1–Arg-24. A glycan (N-linked (GlcNAc...) asparagine) is linked at Asn-5. A helical membrane pass occupies residues Val-25–Leu-48. At Ile-49–Thr-57 the chain is on the cytoplasmic side. Residues Pro-58–Pro-79 traverse the membrane as a helical segment. Topologically, residues Gln-80–Gln-100 are extracellular. Cysteines 97 and 189 form a disulfide. Residues Leu-101–Tyr-120 traverse the membrane as a helical segment. The Cytoplasmic portion of the chain corresponds to Asp-121–Gly-139. Residues Leu-140 to Thr-160 form a helical membrane-spanning segment. Topologically, residues Ala-161–Met-200 are extracellular. A helical transmembrane segment spans residues Val-201–Ile-222. Over Ser-223–Lys-236 the chain is Cytoplasmic. Residues Ala-237–Gln-261 traverse the membrane as a helical segment. Residues Pro-262–Lys-272 are Extracellular-facing. A helical membrane pass occupies residues Leu-273–Leu-292. The Cytoplasmic portion of the chain corresponds to Arg-293–Thr-317.

The protein belongs to the G-protein coupled receptor 1 family.

The protein resides in the cell membrane. In terms of biological role, odorant receptor. The protein is Olfactory receptor 2F1 (OR2F1) of Homo sapiens (Human).